Here is a 473-residue protein sequence, read N- to C-terminus: Photosystem II CP43 reaction center protein (473 aa).

Residues 1–14 (MKILYSQRRFYHVE) constitute a propeptide that is removed on maturation. Threonine 15 bears the N-acetylthreonine mark. Position 15 is a phosphothreonine (threonine 15). Helical transmembrane passes span 69–93 (LFEV…PHLA), 134–155 (LIGP…KDKN), 178–200 (KALY…RKIT), 255–275 (KPFA…LSYS), and 291–312 (WFNN…ASQA). [CaMn4O5] cluster is bound at residue glutamate 367. Residues 447–471 (RARAAAAGFEKGIDRDFEPVLSMTP) traverse the membrane as a helical segment.

The protein belongs to the PsbB/PsbC family. PsbC subfamily. As to quaternary structure, PSII is composed of 1 copy each of membrane proteins PsbA, PsbB, PsbC, PsbD, PsbE, PsbF, PsbH, PsbI, PsbJ, PsbK, PsbL, PsbM, PsbT, PsbX, PsbY, PsbZ, Psb30/Ycf12, at least 3 peripheral proteins of the oxygen-evolving complex and a large number of cofactors. It forms dimeric complexes. Binds multiple chlorophylls and provides some of the ligands for the Ca-4Mn-5O cluster of the oxygen-evolving complex. It may also provide a ligand for a Cl- that is required for oxygen evolution. PSII binds additional chlorophylls, carotenoids and specific lipids. is required as a cofactor.

Its subcellular location is the plastid. It is found in the chloroplast thylakoid membrane. In terms of biological role, one of the components of the core complex of photosystem II (PSII). It binds chlorophyll and helps catalyze the primary light-induced photochemical processes of PSII. PSII is a light-driven water:plastoquinone oxidoreductase, using light energy to abstract electrons from H(2)O, generating O(2) and a proton gradient subsequently used for ATP formation. This is Photosystem II CP43 reaction center protein from Physcomitrium patens (Spreading-leaved earth moss).